The chain runs to 117 residues: cAMP-regulated phosphoprotein 19-B (117 aa).

Over residues 1–37 (MSRDNQEIKAPEESSAEEQKEMDDKVTSPEKAEEIKL) the composition is skewed to basic and acidic residues. Residues 1–54 (MSRDNQEIKAPEESSAEEQKEMDDKVTSPEKAEEIKLKSRYPNIGPKPGGSDFL) form a disordered region. S28 carries the post-translational modification Phosphoserine; by CDK2. S67 is subject to Phosphoserine; by GWL. The disordered stretch occupies residues 77-117 (MKNKQLPTAAPDKTEVTGDHIPTPQDLPQRKPSLVASKLAG). T99 is subject to Phosphothreonine; by CDK2. A Phosphoserine; by PKA modification is found at S109.

The protein belongs to the endosulfine family. As to quaternary structure, interacts (when phosphorylated at Ser-67) with ppp2r2d. In terms of processing, phosphorylation at Ser-67 by gwl during mitosis is essential for interaction with ppp2r2d (PR55-delta) and subsequent inactivation of PP2A.

The protein localises to the cytoplasm. In terms of biological role, protein phosphatase inhibitor that specifically inhibits protein phosphatase 2A (PP2A) during mitosis. When phosphorylated at Ser-67 during mitosis, specifically interacts with ppp2r2d (PR55-delta) and inhibits its activity, leading to inactivation of PP2A, an essential condition to keep cyclin-B1-CDK1 activity high during M phase. The protein is cAMP-regulated phosphoprotein 19-B (arpp19-b) of Xenopus laevis (African clawed frog).